Consider the following 334-residue polypeptide: MKIKVGINGYGTIGKRVAYAVTKQDDMELIGVTKTKPDFEAYRAKELGIPVYAASEEFLPRFEKAGFEVEGTLNDLLEKVDIIVDATPGGMGEKNKQLYEKAGVKAIFQGGEKAEVAQVSFVAQANYEAALGKDYVRVVSCNTTGLVRTLNAIKDYVDYVYAVMIRRAADPNDIKRGPINAIKPSVTIPSHHGPDVQTVIPINIETSAFVVPTTIMHVHSIMVELKKPLTREDVIDIFENTTRVLLFEKEKGFESTAQLIEFARDLHREWNNLYEIAVWKESINVKGNRLFYIQAVHQESDVIPENIDAIRAMFEIAEKWESIKKTNKSLGILK.

NAD(+) is bound by residues 12 to 13 and Gly-111; that span reads TI. Residue 140–142 participates in D-glyceraldehyde 3-phosphate binding; sequence SCN. Cys-141 serves as the catalytic Nucleophile. Arg-167 contacts NAD(+). Residue 192–193 participates in D-glyceraldehyde 3-phosphate binding; sequence HG. An NAD(+)-binding site is contributed by Gln-298.

Belongs to the glyceraldehyde-3-phosphate dehydrogenase family. Homotetramer.

It localises to the encapsulin nanocompartment. The enzyme catalyses D-glyceraldehyde 3-phosphate + phosphate + NADP(+) = (2R)-3-phospho-glyceroyl phosphate + NADPH + H(+). It carries out the reaction D-glyceraldehyde 3-phosphate + phosphate + NAD(+) = (2R)-3-phospho-glyceroyl phosphate + NADH + H(+). The protein operates within carbohydrate degradation; glycolysis; pyruvate from D-glyceraldehyde 3-phosphate: step 1/5. Possible cargo protein of a type 4B encapsulin nanocompartment. Active in the presence of NAD and NADP, prefers NADP. The polypeptide is Glyceraldehyde-3-phosphate dehydrogenase (gap) (Pyrococcus furiosus (strain ATCC 43587 / DSM 3638 / JCM 8422 / Vc1)).